A 690-amino-acid chain; its full sequence is Protein arginine N-methyltransferase 7 (690 aa).

SAM-dependent MTase PRMT-type domains lie at 14 to 357 (QNSW…YSLW) and 366 to 690 (TKSV…QKKL).

The protein belongs to the class I-like SAM-binding methyltransferase superfamily. Protein arginine N-methyltransferase family. PRMT7 subfamily.

Essential arginine methyltransferase that can both catalyze the formation of omega-N monomethylarginine (MMA) and symmetrical dimethylarginine (sDMA). Specifically mediates the symmetrical dimethylation of arginine residues in the small nuclear ribonucleoproteins SmD1 and SmD3. This is Protein arginine N-methyltransferase 7 (Art7) from Drosophila sechellia (Fruit fly).